We begin with the raw amino-acid sequence, 332 residues long: Tetraacyldisaccharide 4'-kinase (332 aa).

60-67 contacts ATP; the sequence is TVGGTGKT.

The protein belongs to the LpxK family.

It catalyses the reaction a lipid A disaccharide + ATP = a lipid IVA + ADP + H(+). It participates in glycolipid biosynthesis; lipid IV(A) biosynthesis; lipid IV(A) from (3R)-3-hydroxytetradecanoyl-[acyl-carrier-protein] and UDP-N-acetyl-alpha-D-glucosamine: step 6/6. Its function is as follows. Transfers the gamma-phosphate of ATP to the 4'-position of a tetraacyldisaccharide 1-phosphate intermediate (termed DS-1-P) to form tetraacyldisaccharide 1,4'-bis-phosphate (lipid IVA). This is Tetraacyldisaccharide 4'-kinase from Pseudomonas paraeruginosa (strain DSM 24068 / PA7) (Pseudomonas aeruginosa (strain PA7)).